The following is a 180-amino-acid chain: Major urinary protein 5 (180 aa).

Residues 1–18 form the signal peptide; that stretch reads MKLLLLLCLELTLVYVHA. A disulfide bond links C82 and C175.

The protein belongs to the calycin superfamily. Lipocalin family.

The protein resides in the secreted. Major urinary proteins (Mups) bind pheromones, and thus stabilize them to allow slow release into the air from urine marks. May protect pheromones from oxidation. May also act as pheromones themselves. In this context, they play a role in the regulation of social behaviors, such as aggression, mating, pup-suckling, territory establishment and dominance. The protein is Major urinary protein 5 of Mus musculus (Mouse).